The sequence spans 269 residues: MEPTQVAENLVPNQQPPVPDLEDPEDTRDESPENSDTVVLSLFPCTPDAVNPEADASASSLQGSFLKHSTTLTNRQRGNEVSALPATLDSLSIHQLAAQGELSQLKDHLRKGACPACTCLSGNNLINKPDERGFTPLIWASAFGEIETVRFLLDWGADPHILAKERESALSLASMGGYTDIVRLLLDRDVDINIYDWNGGTPLLYAVRGNHVKCVEALLARGADLTTEADSGYTPMDLAVALGYRKVQQVMESHILRLFQSTLGPVDPE.

Residues 1 to 36 (MEPTQVAENLVPNQQPPVPDLEDPEDTRDESPENSD) form a disordered region. ANK repeat units follow at residues 88-127 (LDSL…NLIN), 132-161 (RGFT…DPHI), 165-194 (ERES…DINI), 198-227 (NGGT…DLTT), and 231-260 (SGYT…RLFQ).

As to quaternary structure, forms homodimers. The RFX heterotetrameric complex consists of 2 molecules of RFX5 and one each of RFXAP and RFX-B/RFXANK; with each subunit representing a separate complementation group. Interacts (via ankyrin repeats) with RFX5 (via PxLPxI/L motif); the interaction is direct. RFX forms cooperative DNA binding complexes with X2BP and CBF/NF-Y. RFX associates with CIITA to form an active transcriptional complex. Interacts with RAF1. Interacts with RFX7. Post-translationally, phosphorylated by RAF1. Expressed primarily in thymus, lung and testis.

It is found in the cytoplasm. The protein localises to the nucleus. Functionally, activates transcription from class II MHC promoters. Activation requires the activity of the MHC class II transactivator/CIITA. May regulate other genes in the cell. RFX binds the X1 box of MHC-II promoters. May also potentiate the activation of RAF1. This is DNA-binding protein RFXANK (Rfxank) from Mus musculus (Mouse).